Consider the following 127-residue polypeptide: MARITAEDCNKIIPDRFRLVVLATRYAKLLNYKVETNQIKKEKRDKPPVISLRRIAAGKVSVPQLEQDLINSLRTSSMIEPLVNQDESEDVEEKFEYLPEVYIGEDYSDLDDQIFINENGEDYETDK.

Belongs to the RNA polymerase subunit omega family. As to quaternary structure, the RNAP catalytic core consists of 2 alpha, 1 beta, 1 beta' and 1 omega subunit. When a sigma factor is associated with the core the holoenzyme is formed, which can initiate transcription.

It catalyses the reaction RNA(n) + a ribonucleoside 5'-triphosphate = RNA(n+1) + diphosphate. Promotes RNA polymerase assembly. Latches the N- and C-terminal regions of the beta' subunit thereby facilitating its interaction with the beta and alpha subunits. This Rickettsia typhi (strain ATCC VR-144 / Wilmington) protein is DNA-directed RNA polymerase subunit omega.